A 367-amino-acid polypeptide reads, in one-letter code: Chorismate synthase (367 aa).

Arginine 48 serves as a coordination point for NADP(+). FMN contacts are provided by residues 125-127 (RSS), 243-244 (NA), glycine 283, 298-302 (KPTSS), and arginine 324.

The protein belongs to the chorismate synthase family. As to quaternary structure, homotetramer. Requires FMNH2 as cofactor.

It carries out the reaction 5-O-(1-carboxyvinyl)-3-phosphoshikimate = chorismate + phosphate. It participates in metabolic intermediate biosynthesis; chorismate biosynthesis; chorismate from D-erythrose 4-phosphate and phosphoenolpyruvate: step 7/7. Functionally, catalyzes the anti-1,4-elimination of the C-3 phosphate and the C-6 proR hydrogen from 5-enolpyruvylshikimate-3-phosphate (EPSP) to yield chorismate, which is the branch point compound that serves as the starting substrate for the three terminal pathways of aromatic amino acid biosynthesis. This reaction introduces a second double bond into the aromatic ring system. This Psychrobacter sp. (strain PRwf-1) protein is Chorismate synthase.